Reading from the N-terminus, the 606-residue chain is Aspartate--tRNA(Asp/Asn) ligase (606 aa).

Glu177 is an L-aspartate binding site. An aspartate region spans residues 201 to 204; the sequence is QLFK. Arg223 lines the L-aspartate pocket. Residues 223-225 and Gln232 each bind ATP; that span reads RDE. His461 serves as a coordination point for L-aspartate. An ATP-binding site is contributed by Glu499. Residue Arg506 coordinates L-aspartate. ATP is bound at residue 551 to 554; it reads GMDR.

The protein belongs to the class-II aminoacyl-tRNA synthetase family. Type 1 subfamily. In terms of assembly, homodimer.

Its subcellular location is the cytoplasm. It carries out the reaction tRNA(Asx) + L-aspartate + ATP = L-aspartyl-tRNA(Asx) + AMP + diphosphate. Its function is as follows. Aspartyl-tRNA synthetase with relaxed tRNA specificity since it is able to aspartylate not only its cognate tRNA(Asp) but also tRNA(Asn). Reaction proceeds in two steps: L-aspartate is first activated by ATP to form Asp-AMP and then transferred to the acceptor end of tRNA(Asp/Asn). The polypeptide is Aspartate--tRNA(Asp/Asn) ligase (Prochlorococcus marinus (strain MIT 9303)).